Consider the following 101-residue polypeptide: Small ubiquitin-related modifier 1 (101 aa).

Ser2 is subject to N-acetylserine. At Ser2 the chain carries Phosphoserine. Lys7 participates in a covalent cross-link: Glycyl lysine isopeptide (Lys-Gly) (interchain with G-Cter in SUMO1); alternate. A Glycyl lysine isopeptide (Lys-Gly) (interchain with G-Cter in SUMO2); alternate cross-link involves residue Lys7. Ser9 carries the phosphoserine modification. Residues Lys16, Lys17, and Lys23 each participate in a glycyl lysine isopeptide (Lys-Gly) (interchain with G-Cter in SUMO2) cross-link. In terms of domain architecture, Ubiquitin-like spans 20–97 (EYIKLKVIGQ…IEVYQEQTGG (78 aa)). Lys25 participates in a covalent cross-link: Glycyl lysine isopeptide (Lys-Gly) (interchain with G-Cter in SUMO1). Ser32 is subject to Phosphoserine. Residues Lys37, Lys39, Lys45, and Lys46 each participate in a glycyl lysine isopeptide (Lys-Gly) (interchain with G-Cter in SUMO2) cross-link. Gly97 participates in a covalent cross-link: Glycyl lysine isopeptide (Gly-Lys) (interchain with K-? in acceptor proteins). The propeptide occupies 98-101 (HSNV).

The protein belongs to the ubiquitin family. SUMO subfamily. Covalently attached to KCNB1; UBE2I increases cross-linking with KCNB1 and PIAS1 decreases cross-links with KCNB1. Interacts with SAE2, RANBP2, PIAS1 and PIAS2. Interacts with PRKN. Covalently attached to a number of proteins such as IKFZ1, PML, RANGAP1, HIPK2, SP100, p53, p73-alpha, MDM2, JUN, DNMT3B and TDG. Also interacts with HIF1A, HIPK2, HIPK3, CHD3, EXOSC9, RAD51 and RAD52. Interacts with USP25 (via ts SIM domain); the interaction weakly sumoylates USP25. Interacts with SIMC1, CASP8AP2, RNF111 and SOBP (via SIM domains). Interacts with BHLHE40/DEC1. Interacts with RWDD3. Interacts with UBE2I/UBC9 and this interaction is enhanced in the presence of RWDD3. Interacts with MTA1. Interacts with SENP2. Interacts with HINT1. Post-translationally, cleavage of precursor form by SENP1 or SENP2 is necessary for function. Polymeric SUMO1 chains undergo polyubiquitination by RNF4.

It localises to the nucleus membrane. The protein resides in the nucleus speckle. It is found in the cytoplasm. Its subcellular location is the nucleus. The protein localises to the PML body. It localises to the cell membrane. In terms of biological role, ubiquitin-like protein that can be covalently attached to proteins as a monomer or a lysine-linked polymer. Covalent attachment via an isopeptide bond to its substrates requires prior activation by the E1 complex SAE1-SAE2 and linkage to the E2 enzyme UBE2I, and can be promoted by E3 ligases such as PIAS1-4, RANBP2 or CBX4. This post-translational modification on lysine residues of proteins plays a crucial role in a number of cellular processes such as nuclear transport, DNA replication and repair, mitosis and signal transduction. Involved for instance in targeting RANGAP1 to the nuclear pore complex protein RANBP2. Covalently attached to the voltage-gated potassium channel KCNB1; this modulates the gating characteristics of KCNB1. Polymeric SUMO1 chains are also susceptible to polyubiquitination which functions as a signal for proteasomal degradation of modified proteins. May be involved in modified proteins. May also regulate a network of genes involved in palate development. Covalently attached to ZFHX3. In Ictidomys tridecemlineatus (Thirteen-lined ground squirrel), this protein is Small ubiquitin-related modifier 1 (SUMO1).